Reading from the N-terminus, the 697-residue chain is MSISCTRNFFKRFCVEEYNMDTFKHSSFLSADLLPSLGARINQSTKLRKHIISPFDPRFRGWEMWLVILVIYSAWICPFEFAFITYKKDALFIIDNIVNGFFAIDIILTFFVAYLDSHSYLLVDKPKKIAIRYLSTWFAFDVCSTAPFQSLSLLFKYNGSEIGFRVLSMLRLWRLRRVSSLFARLEKDIRFNYFWTRCTKLISVTLFAVHCAGCFAYLIADQYHDPTKTWIGAVYPNFKETSVWSRYVTALYWSITTLTTTGYGDLHAENPREMLFFVFFMLFNLGFTSYLIGNMTNLVVHWTSRTRNFRDTVRAASEFASRNQLPPNIQDQMLSHICLKFKTEGLKQQEALNGLPKAIRSSIANYLFFPIVQNVYLFHGVSRNFLFQLVSDIDAEYFPPREDVILQNEAPTDLYILVSGAVDFTVYVGEEDQVQGKAVVGDAFGEIGVLCYTPQPFTVRTTELSQILRISKKSLMSAMRAHVEDGRVIMNNLFMKLRGQQSIAIDDPNSEPESLLKEWLVGGSKTGEGNASDQGHGHKYLQLHDSENIDMGSTEWRDSRRSGYGETKRVREHTIEIEEGEKPNKEFDGKGCSDADLTSFEFHSQEAYPYCRSNIQIKQHEAAKPKDKRVTIHLKSRDKDLSKLIILPASIEELLRLAGEKFGYSFTKVTNAENAEIDDEDVIRDGDHLYILINENS.

The Cytoplasmic portion of the chain corresponds to M1–E63. A helical transmembrane segment spans residues M64–I84. Topologically, residues T85 to L91 are extracellular. Residues F92–V112 form a helical membrane-spanning segment. Topologically, residues A113–L134 are cytoplasmic. The chain crosses the membrane as a helical span at residues S135 to F155. The Extracellular portion of the chain corresponds to K156–R165. N158 is a glycosylation site (N-linked (GlcNAc...) asparagine). The chain crosses the membrane as a helical; Voltage-sensor span at residues V166–E186. Residues K187 to K200 lie on the Cytoplasmic side of the membrane. A helical membrane pass occupies residues L201–D221. The Extracellular segment spans residues Q222–V248. The pore-forming intramembrane region spans T249–A268. The Extracellular portion of the chain corresponds to E269–R272. Residues E273–G293 traverse the membrane as a helical segment. The Cytoplasmic segment spans residues N294–S697. L377–K496 lines the a nucleoside 3',5'-cyclic phosphate pocket. The KHA domain maps to R629–S697.

The protein belongs to the potassium channel family. Plant (TC 1.A.1.4) subfamily. The potassium channel is probably composed of a homo- or heterotetrameric complex of pore-forming subunits. May interact with KAT1. Interacts with SLAC1. In terms of tissue distribution, expressed in guard cells of hypocotyls, stems leaves and petioles. Detected also in the phloem of minor veins and in flower at a lower level.

The protein localises to the membrane. Its function is as follows. Highly selective inward-rectifying potassium channel. This voltage-dependent channel could mediate long-term potassium influx into guard cells leading to stomatal opening. Assuming opened or closed conformations in response to the voltage difference across the membrane, the channel is activated by hyperpolarization. The channel activity is enhanced upon external acidification. The chain is Potassium channel KAT2 (KAT2) from Arabidopsis thaliana (Mouse-ear cress).